The primary structure comprises 226 residues: N-acetylmuramic acid 6-phosphate phosphatase (226 aa).

Residue Asp12 is the Nucleophile of the active site. The Mg(2+) site is built by Asp12, Asp14, and Asp171. The active-site Proton donor is the Asp14.

Belongs to the HAD-like hydrolase superfamily. CbbY/CbbZ/Gph/YieH family. Phosphatase MupP subfamily. Requires Mg(2+) as cofactor.

The enzyme catalyses N-acetyl-D-muramate 6-phosphate + H2O = N-acetyl-D-muramate + phosphate. The protein operates within cell wall biogenesis; peptidoglycan recycling. Specifically catalyzes the dephosphorylation of N-acetylmuramate 6-phosphate (MurNAc-6P) to MurNac. Is involved in peptidoglycan recycling as part of a cell wall recycling pathway that bypasses de novo biosynthesis of the peptidoglycan precursor UDP-MurNAc. Plays a role in intrinsic resistance to fosfomycin, which targets the de novo synthesis of UDP-MurNAc. This chain is N-acetylmuramic acid 6-phosphate phosphatase, found in Pseudomonas aeruginosa (strain ATCC 15692 / DSM 22644 / CIP 104116 / JCM 14847 / LMG 12228 / 1C / PRS 101 / PAO1).